Reading from the N-terminus, the 448-residue chain is Delta(14)-sterol reductase ERG24 (448 aa).

Transmembrane regions (helical) follow at residues 18–38 (ISGALGITIGLPTLTVLFYLL), 75–95 (CWSAYLAWFFILVILDYLLPG), 108–128 (VLNYKINGLSMSSLLIVLLLA), 157–177 (IIICFLFSFMLAVFVYIISFI), 251–271 (VTDSMIVVNLLQAFYIFDGVL), 279–299 (MIDITTDGFGFMLSFGDLAWV), and 318–338 (NLGWTLSLLIVGLQALGFYIF). NADP(+) contacts are provided by residues lysine 345, arginine 349, leucine 368, tryptophan 373, and 380–381 (NY). Residues 394-414 (PTGFQTPLTYFYVIYFASLLI) form a helical membrane-spanning segment. Residues aspartate 420, 424-428 (CRAKY), and tyrosine 435 each bind NADP(+).

Belongs to the ERG4/ERG24 family.

The protein localises to the endoplasmic reticulum membrane. The catalysed reaction is 4,4-dimethyl-5alpha-cholesta-8,24-dien-3beta-ol + NADP(+) = 4,4-dimethyl-5alpha-cholesta-8,14,24-trien-3beta-ol + NADPH + H(+). It functions in the pathway steroid biosynthesis; zymosterol biosynthesis; zymosterol from lanosterol: step 2/6. C-14 sterol reductase; part of the third module of ergosterol biosynthesis pathway that includes the late steps of the pathway. ERG24 reduces the C14=C15 double bond of 4,4-dimethyl-cholesta-8,14,24-trienol to produce 4,4-dimethyl-cholesta-8,24-dienol. The third module or late pathway involves the ergosterol synthesis itself through consecutive reactions that mainly occur in the endoplasmic reticulum (ER) membrane. Firstly, the squalene synthase ERG9 catalyzes the condensation of 2 farnesyl pyrophosphate moieties to form squalene, which is the precursor of all steroids. Squalene synthase is crucial for balancing the incorporation of farnesyl diphosphate (FPP) into sterol and nonsterol isoprene synthesis. Secondly, the squalene epoxidase ERG1 catalyzes the stereospecific oxidation of squalene to (S)-2,3-epoxysqualene, which is considered to be a rate-limiting enzyme in steroid biosynthesis. Then, the lanosterol synthase ERG7 catalyzes the cyclization of (S)-2,3 oxidosqualene to lanosterol, a reaction that forms the sterol core. In the next steps, lanosterol is transformed to zymosterol through a complex process involving various demethylation, reduction and desaturation reactions. The lanosterol 14-alpha-demethylase ERG11 (also known as CYP51) catalyzes C14-demethylation of lanosterol to produce 4,4'-dimethyl cholesta-8,14,24-triene-3-beta-ol, which is critical for ergosterol biosynthesis. The C-14 reductase ERG24 reduces the C14=C15 double bond of 4,4-dimethyl-cholesta-8,14,24-trienol to produce 4,4-dimethyl-cholesta-8,24-dienol. 4,4-dimethyl-cholesta-8,24-dienol is substrate of the C-4 demethylation complex ERG25-ERG26-ERG27 in which ERG25 catalyzes the three-step monooxygenation required for the demethylation of 4,4-dimethyl and 4alpha-methylsterols, ERG26 catalyzes the oxidative decarboxylation that results in a reduction of the 3-beta-hydroxy group at the C-3 carbon to an oxo group, and ERG27 is responsible for the reduction of the keto group on the C-3. ERG28 has a role as a scaffold to help anchor ERG25, ERG26 and ERG27 to the endoplasmic reticulum and ERG29 regulates the activity of the iron-containing C4-methylsterol oxidase ERG25. Then, the sterol 24-C-methyltransferase ERG6 catalyzes the methyl transfer from S-adenosyl-methionine to the C-24 of zymosterol to form fecosterol. The C-8 sterol isomerase ERG2 catalyzes the reaction which results in unsaturation at C-7 in the B ring of sterols and thus converts fecosterol to episterol. The sterol-C5-desaturase ERG3 then catalyzes the introduction of a C-5 double bond in the B ring to produce 5-dehydroepisterol. The C-22 sterol desaturase ERG5 further converts 5-dehydroepisterol into ergosta-5,7,22,24(28)-tetraen-3beta-ol by forming the C-22(23) double bond in the sterol side chain. Finally, ergosta-5,7,22,24(28)-tetraen-3beta-ol is substrate of the C-24(28) sterol reductase ERG4 to produce ergosterol. The protein is Delta(14)-sterol reductase ERG24 of Candida albicans (strain SC5314 / ATCC MYA-2876) (Yeast).